Reading from the N-terminus, the 220-residue chain is 7-cyano-7-deazaguanine synthase (220 aa).

Phenylalanine 10–leucine 20 contributes to the ATP binding site. The Zn(2+) site is built by cysteine 186, cysteine 195, cysteine 198, and cysteine 201.

This sequence belongs to the QueC family. In terms of assembly, homodimer. Requires Zn(2+) as cofactor.

The enzyme catalyses 7-carboxy-7-deazaguanine + NH4(+) + ATP = 7-cyano-7-deazaguanine + ADP + phosphate + H2O + H(+). It participates in purine metabolism; 7-cyano-7-deazaguanine biosynthesis. In terms of biological role, catalyzes the ATP-dependent conversion of 7-carboxy-7-deazaguanine (CDG) to 7-cyano-7-deazaguanine (preQ(0)). The sequence is that of 7-cyano-7-deazaguanine synthase from Bacillus anthracis (strain A0248).